The sequence spans 322 residues: AA9 family lytic polysaccharide monooxygenase B (322 aa).

The signal sequence occupies residues 1–17; sequence MFSKSIIAASLLTAVTA. Position 18 (His18) interacts with Cu(2+). N-linked (GlcNAc...) asparagine glycosylation is found at Asn53 and Asn68. Cys56 and Cys173 are disulfide-bonded. Residue His87 coordinates Cu(2+). Asn121 and Asn133 each carry an N-linked (GlcNAc...) asparagine glycan. Residues His159 and Gln168 each coordinate O2. Tyr170 is a Cu(2+) binding site. Residue Asn197 is glycosylated (N-linked (GlcNAc...) asparagine).

It belongs to the polysaccharide monooxygenase AA9 family. The cofactor is Cu(2+).

The protein localises to the secreted. The catalysed reaction is [(1-&gt;4)-beta-D-glucosyl]n+m + reduced acceptor + O2 = 4-dehydro-beta-D-glucosyl-[(1-&gt;4)-beta-D-glucosyl]n-1 + [(1-&gt;4)-beta-D-glucosyl]m + acceptor + H2O.. Functionally, lytic polysaccharide monooxygenase (LPMO) that depolymerizes crystalline and amorphous polysaccharides via the oxidation of scissile alpha- or beta-(1-4)-glycosidic bonds, yielding C1 and C4 oxidation products. Catalysis by LPMOs requires the reduction of the active-site copper from Cu(II) to Cu(I) by a reducing agent and H(2)O(2) or O(2) as a cosubstrate. The protein is AA9 family lytic polysaccharide monooxygenase B of Botryotinia fuckeliana (strain B05.10) (Noble rot fungus).